A 691-amino-acid chain; its full sequence is 1,4-alpha-glucan-branching enzyme (691 aa).

(1,4-alpha-D-glucosyl)n-binding residues include Trp80 and Lys116. Residue Asp333 is the Nucleophile of the active site. The Proton donor role is filled by Glu398.

The protein belongs to the glycosyl hydrolase 13 family. GlgB subfamily.

It is found in the cytoplasm. It catalyses the reaction Transfers a segment of a (1-&gt;4)-alpha-D-glucan chain to a primary hydroxy group in a similar glucan chain.. It participates in glycan biosynthesis; glycogen biosynthesis. In terms of biological role, glycogen-branching enzyme participates in the glycogen biosynthetic process along with glycogenin and glycogen synthase. Generates alpha-1,6-glucosidic branches from alpha-1,4-linked glucose chains, to increase solubility of the glycogen polymer. This chain is 1,4-alpha-glucan-branching enzyme (GLC3), found in Yarrowia lipolytica (strain CLIB 122 / E 150) (Yeast).